Consider the following 122-residue polypeptide: Small ribosomal subunit protein uS13c (122 aa).

Positions 102 to 122 (RTRTNARTRRGAKKTVAGKKK) are disordered.

This sequence belongs to the universal ribosomal protein uS13 family. Part of the 30S ribosomal subunit.

Its subcellular location is the plastid. The protein localises to the chloroplast. Functionally, located at the top of the head of the 30S subunit, it contacts several helices of the 16S rRNA. The protein is Small ribosomal subunit protein uS13c of Guillardia theta (Cryptophyte).